The following is an 83-amino-acid chain: Weak toxin DE-1 (83 aa).

An N-terminal signal peptide occupies residues 1 to 21; that stretch reads MKTLLLTLVVVTIVCLDLGYS. 4 cysteine pairs are disulfide-bonded: Cys24/Cys45, Cys38/Cys62, Cys64/Cys75, and Cys76/Cys81.

Belongs to the three-finger toxin family. Short-chain subfamily. Type I alpha-neurotoxin sub-subfamily. Expressed by the venom gland.

It localises to the secreted. The chain is Weak toxin DE-1 from Ophiophagus hannah (King cobra).